The primary structure comprises 434 residues: Alpha-enolase (434 aa).

Ser-40 contributes to the Mg(2+) binding site. Substrate is bound by residues His-158 and Glu-167. Catalysis depends on Glu-210, which acts as the Proton donor. Asp-245, Glu-293, and Asp-318 together coordinate Mg(2+). Substrate contacts are provided by Glu-293 and Asp-318. Residue Lys-343 is the Proton acceptor of the active site. Residues Ser-370 to Ser-373 and Lys-394 each bind substrate.

The protein belongs to the enolase family. In terms of assembly, homodimer. Mg(2+) is required as a cofactor.

It is found in the cytoplasm. It carries out the reaction (2R)-2-phosphoglycerate = phosphoenolpyruvate + H2O. It participates in carbohydrate degradation; glycolysis; pyruvate from D-glyceraldehyde 3-phosphate: step 4/5. The sequence is that of Alpha-enolase from Alligator mississippiensis (American alligator).